Reading from the N-terminus, the 205-residue chain is Dephospho-CoA kinase (205 aa).

Residues 7 to 204 (LVGLTGGIGS…ARYLAAARAT (198 aa)) form the DPCK domain. 15 to 20 (GSGKSA) contributes to the ATP binding site.

It belongs to the CoaE family.

The protein localises to the cytoplasm. The catalysed reaction is 3'-dephospho-CoA + ATP = ADP + CoA + H(+). The protein operates within cofactor biosynthesis; coenzyme A biosynthesis; CoA from (R)-pantothenate: step 5/5. Its function is as follows. Catalyzes the phosphorylation of the 3'-hydroxyl group of dephosphocoenzyme A to form coenzyme A. In Aromatoleum aromaticum (strain DSM 19018 / LMG 30748 / EbN1) (Azoarcus sp. (strain EbN1)), this protein is Dephospho-CoA kinase.